Consider the following 329-residue polypeptide: Probable endo-beta-1,4-glucanase B (329 aa).

Positions 1–18 (MKFGSIVLIAAAAGSAVA) are cleaved as a signal peptide. N-linked (GlcNAc...) asparagine glycans are attached at residues asparagine 33 and asparagine 96. Glutamate 156 serves as the catalytic Proton donor. Glutamate 263 acts as the Nucleophile in catalysis.

Belongs to the glycosyl hydrolase 5 (cellulase A) family.

Its subcellular location is the secreted. It catalyses the reaction Endohydrolysis of (1-&gt;4)-beta-D-glucosidic linkages in cellulose, lichenin and cereal beta-D-glucans.. Has endoglucanase activity on substrates containing beta-1,4 glycosidic bonds, like in carboxymethylcellulose (CMC), hydroxyethylcellulose (HEC) and beta-glucan. Involved in the degradation of complex natural cellulosic substrates. The sequence is that of Probable endo-beta-1,4-glucanase B (eglB) from Neosartorya fischeri (strain ATCC 1020 / DSM 3700 / CBS 544.65 / FGSC A1164 / JCM 1740 / NRRL 181 / WB 181) (Aspergillus fischerianus).